The primary structure comprises 407 residues: Tyrosine--tRNA ligase (407 aa).

Y35 contributes to the L-tyrosine binding site. A 'HIGH' region motif is present at residues 40–49 (PTADSLHVGH). Residues Y168 and Q172 each contribute to the L-tyrosine site. Positions 228–232 (KMGKT) match the 'KMSKS' region motif. K231 lines the ATP pocket. One can recognise an S4 RNA-binding domain in the interval 341-405 (NSLVDLLAKC…RGKKNFNRIV (65 aa)).

The protein belongs to the class-I aminoacyl-tRNA synthetase family. TyrS type 1 subfamily. Homodimer.

It is found in the cytoplasm. It carries out the reaction tRNA(Tyr) + L-tyrosine + ATP = L-tyrosyl-tRNA(Tyr) + AMP + diphosphate + H(+). In terms of biological role, catalyzes the attachment of tyrosine to tRNA(Tyr) in a two-step reaction: tyrosine is first activated by ATP to form Tyr-AMP and then transferred to the acceptor end of tRNA(Tyr). This is Tyrosine--tRNA ligase from Clostridium botulinum (strain Loch Maree / Type A3).